The following is a 4065-amino-acid chain: Polyketide synthase-nonribosomal peptide synthetase pyiS (4065 aa).

Residues Ser-6–Ala-440 form the Ketosynthase family 3 (KS3) domain. Catalysis depends on for beta-ketoacyl synthase activity residues Cys-179, His-314, and His-360. An acyl transferase region spans residues Ile-552 to Lys-875. The tract at residues Asn-950–Ser-1087 is N-terminal hotdog fold. Residues Asn-950–Ala-1260 enclose the PKS/mFAS DH domain. The segment at Glu-951–Leu-1254 is dehydratase (DH) domain. Residue His-982 is the Proton acceptor; for dehydratase activity of the active site. Positions Glu-1102 to Ala-1260 are C-terminal hotdog fold. The Proton donor; for dehydratase activity role is filled by Asp-1166. A methyltransferase (MT) domain region spans residues Ala-1409–Thr-1593. The interval Thr-2129–Ile-2302 is ketoreductase (KR)domain. The Carrier 1 domain occupies Ile-2411 to Leu-2492. Residue Ser-2452 is modified to O-(pantetheine 4'-phosphoryl)serine. The segment at Leu-2497–Lys-2561 is disordered. A compositionally biased stretch (basic and acidic residues) spans Ser-2551–Lys-2561. A condensation region spans residues Ser-2645–Ala-3076. The interval Asp-3112–Asp-3516 is adenylation. The 81-residue stretch at Gln-3634 to Ser-3714 folds into the Carrier 2 domain. Position 3674 is an O-(pantetheine 4'-phosphoryl)serine (Ser-3674). The reductase-like stretch occupies residues Leu-3760–Ala-3975.

This sequence belongs to the NRP synthetase family.

It participates in mycotoxin biosynthesis. Hybrid PKS-NRPS synthetase; part of the gene cluster that mediates the biosynthesis of the mycotoxin pyrichalasin H, a tyrosine-derived cytochalasan that inhibits the growth of rice seedlings, but also inhibits lymphocyte capping and actin polymerization and alters cell morphology. Pyrichalasin H is indicated as the responsible agent for the genus-specific pathogenicity of M.grisea toward crabgrass. The first step in the pathway is catalyzed by the O-methyltransferase pyiA which methylates free tyrosine to generate the precursor O-methyltyrosine. The hybrid PKS-NRPS pyiS, assisted by the enoyl reductase pyiC, are responsible for fusion of the O-methyltyrosine precursor and the polyketide backbone. The polyketide synthase module (PKS) of pyiS is responsible for the synthesis of the polyketide backbone and the downstream nonribosomal peptide synthetase (NRPS) amidates the carboxyl end of the polyketide with the O-methyltyrosine precursor. As the NRPS A-domain demonstrates substrate tolerance, pyiS can also use phenylalanine, tyrosine and even para-chlorophenylalanine as amino acid precursor, which leads to the production of novel cytochalasans, including halogenated cytochalasans. Because pyiS lacks a designated enoylreductase (ER) domain, the required activity is provided the enoyl reductase pyiC. Reduction by the hydrolyase pyiE leads to 1,5-dihydropyrrolone, which is substrate for dehydration and intra-molecular Diels-Alder cyclization by the Diels-Alderase pyiF to yield the required isoindolone-fused macrocycle. The tailoring cytochrome P450 monooxygenases piyD and piyG catalyze the hydroxylation at C-18 and C-7, respectivily, whereas the short-chain dehydrogenase/reductase pyiH reduces the carbonyl at C-21 in preparation for the transfer of an acetyl group by the acetyltransferase pyiB. These 3 reactions whose order is not clear yet, lead to the production of O-methylpyrichalasin J, a deacetylated pyrichalasin H. Finally, pyiB to converts O-methylpyrichalasin J into the final product pyrichalasin H via acetylation of C-21. The polypeptide is Polyketide synthase-nonribosomal peptide synthetase pyiS (Pyricularia grisea (Crabgrass-specific blast fungus)).